The chain runs to 183 residues: Protein SHI RELATED SEQUENCE 6 (183 aa).

Residues cysteine 41, cysteine 44, cysteine 52, cysteine 57, cysteine 61, and cysteine 68 each contribute to the Zn(2+) site. The zn(2)-C6 fungal-type; degenerate DNA-binding region spans 41 to 68 (CRDCGNRAKKECLFERCRTCCKSRGYNC). Residues 79 to 88 (SSATRSSSSP) show a composition bias toward low complexity. Residues 79–121 (SSATRSSSSPSERKKKLKIDKQSSPNVSLLPTTTSRQERGFRE) are disordered. Over residues 100 to 113 (QSSPNVSLLPTTTS) the composition is skewed to polar residues. Positions 157 to 160 (ISGH) match the Required for homo- and heterodimerization motif.

It belongs to the SHI protein family.

It is found in the nucleus. Transcription activator that binds DNA on 5'-ACTCTAC-3' and promotes auxin homeostasis-regulating gene expression (e.g. YUC genes), as well as genes affecting stamen development, cell expansion and timing of flowering. Synergistically with other SHI-related proteins, regulates gynoecium, stamen and leaf development in a dose-dependent manner, controlling apical-basal patterning. Promotes style and stigma formation, and influences vascular development during gynoecium development. May also have a role in the formation and/or maintenance of the shoot apical meristem (SAM). The protein is Protein SHI RELATED SEQUENCE 6 (SRS6) of Arabidopsis thaliana (Mouse-ear cress).